The chain runs to 429 residues: C4-dicarboxylate transport protein (429 aa).

The next 8 helical transmembrane spans lie at 3–23 (VSIF…GVLL), 44–64 (LIKM…IAGM), 76–96 (IALL…LVVV), 144–164 (AFAS…GFAL), 184–204 (VIFG…FGAM), 222–242 (LILC…GTIA), 331–351 (TLLV…GSGF), and 352–372 (IVLA…LALI).

Belongs to the dicarboxylate/amino acid:cation symporter (DAACS) (TC 2.A.23) family.

Its subcellular location is the cell inner membrane. Responsible for the transport of dicarboxylates such as succinate, fumarate, and malate from the periplasm across the membrane. The chain is C4-dicarboxylate transport protein from Yersinia pestis bv. Antiqua (strain Antiqua).